The following is a 184-amino-acid chain: Probable cobalt-precorrin-6B C(15)-methyltransferase (decarboxylating) (184 aa).

S-adenosyl-L-methionine contacts are provided by residues Thr12, 36–40 (GCGTG), Asp59, and Ala87.

It belongs to the methyltransferase superfamily. Archaeal-type CbiT family.

The catalysed reaction is Co-precorrin-6B + S-adenosyl-L-methionine = Co-precorrin-7 + S-adenosyl-L-homocysteine + CO2. The protein operates within cofactor biosynthesis; adenosylcobalamin biosynthesis; cob(II)yrinate a,c-diamide from sirohydrochlorin (anaerobic route): step 8/10. In terms of biological role, catalyzes the methylation of C-15 in cobalt-precorrin-6B followed by the decarboxylation of C-12 to form cobalt-precorrin-7. The protein is Probable cobalt-precorrin-6B C(15)-methyltransferase (decarboxylating) of Methanosarcina mazei (strain ATCC BAA-159 / DSM 3647 / Goe1 / Go1 / JCM 11833 / OCM 88) (Methanosarcina frisia).